The sequence spans 122 residues: Large ribosomal subunit protein uL14 (122 aa).

This sequence belongs to the universal ribosomal protein uL14 family. In terms of assembly, part of the 50S ribosomal subunit. Forms a cluster with proteins L3 and L19. In the 70S ribosome, L14 and L19 interact and together make contacts with the 16S rRNA in bridges B5 and B8.

Functionally, binds to 23S rRNA. Forms part of two intersubunit bridges in the 70S ribosome. The polypeptide is Large ribosomal subunit protein uL14 (Malacoplasma penetrans (strain HF-2) (Mycoplasma penetrans)).